The chain runs to 287 residues: ATP synthase gamma chain (287 aa).

The protein belongs to the ATPase gamma chain family. As to quaternary structure, F-type ATPases have 2 components, CF(1) - the catalytic core - and CF(0) - the membrane proton channel. CF(1) has five subunits: alpha(3), beta(3), gamma(1), delta(1), epsilon(1). CF(0) has three main subunits: a, b and c.

It localises to the cell inner membrane. Functionally, produces ATP from ADP in the presence of a proton gradient across the membrane. The gamma chain is believed to be important in regulating ATPase activity and the flow of protons through the CF(0) complex. The polypeptide is ATP synthase gamma chain (Photorhabdus laumondii subsp. laumondii (strain DSM 15139 / CIP 105565 / TT01) (Photorhabdus luminescens subsp. laumondii)).